The sequence spans 794 residues: Zinc finger protein 148 (794 aa).

Lysine 6 is covalently cross-linked (Glycyl lysine isopeptide (Lys-Gly) (interchain with G-Cter in SUMO2)). Serine 51 is modified (phosphoserine). Residues lysine 88, lysine 115, and lysine 132 each participate in a glycyl lysine isopeptide (Lys-Gly) (interchain with G-Cter in SUMO2) cross-link. The C2H2-type 1 zinc finger occupies 171–193; that stretch reads HVCEHCNAAFRTNYHLQRHVFIH. At threonine 194 the chain carries Phosphothreonine. 2 C2H2-type zinc fingers span residues 199–221 and 227–249; these read FQCS…EKIH and FRCD…KRTH. Serine 250 is subject to Phosphoserine. Residues 255–278 form a C2H2-type 4 zinc finger; the sequence is YQCEYCLQYFSRTDRVLKHKRMCH. Lysine 291 participates in a covalent cross-link: Glycyl lysine isopeptide (Lys-Gly) (interchain with G-Cter in SUMO2). The tract at residues 298–346 is disordered; that stretch reads EEDSGFSTSPKDNSLPKKKRQKPEKKSSGMDKESVLDKSDTKKDRNDYL. Phosphoserine is present on residues serine 301 and serine 306. A Glycyl lysine isopeptide (Lys-Gly) (interchain with G-Cter in SUMO2) cross-link involves residue lysine 308. Basic and acidic residues predominate over residues 321–344; it reads EKKSSGMDKESVLDKSDTKKDRND. A Glycyl lysine isopeptide (Lys-Gly) (interchain with G-Cter in SUMO1); alternate cross-link involves residue lysine 356. Lysine 356 is covalently cross-linked (Glycyl lysine isopeptide (Lys-Gly) (interchain with G-Cter in SUMO2); alternate). A Glycyl lysine isopeptide (Lys-Gly) (interchain with G-Cter in SUMO2) cross-link involves residue lysine 402. A Phosphoserine modification is found at serine 412. Residues lysine 421 and lysine 424 each participate in a glycyl lysine isopeptide (Lys-Gly) (interchain with G-Cter in SUMO2) cross-link. Residues 574–588 show a composition bias toward polar residues; that stretch reads NSSDVPEVTQSENVG. The tract at residues 574-596 is disordered; the sequence is NSSDVPEVTQSENVGSSSQASSS. The residue at position 607 (lysine 607) is an N6-acetyllysine. Residues serine 665 and serine 784 each carry the phosphoserine modification.

It belongs to the krueppel C2H2-type zinc-finger protein family. As to quaternary structure, interacts with HNRNPDL. Interacts with the 5FMC complex; the interaction requires association with CHTOP. Interacts with CAVIN1. Sumoylated with SUMO2. Desumoylated by SENP3, resulting in the stimulation of transcription of its target genes. Expressed in heart, lung, kidney, skeletal muscle, liver, brain and spleen.

The protein resides in the nucleus. In terms of biological role, involved in transcriptional regulation. Represses the transcription of a number of genes including gastrin, stromelysin and enolase. Binds to the G-rich box in the enhancer region of these genes. In Rattus norvegicus (Rat), this protein is Zinc finger protein 148 (Znf148).